Consider the following 654-residue polypeptide: Coiled-coil domain-containing protein 30 (654 aa).

The interval 38–65 (TLESRRDPNSSLQKEFPQHQDEDQSRAA) is disordered. Basic and acidic residues predominate over residues 53-62 (FPQHQDEDQS). 2 coiled-coil regions span residues 97 to 244 (REER…LDNA) and 276 to 559 (KSQQ…QIIR). The segment at 614 to 654 (AAAIPKSPEPLSRSQDSESGYINVTSLKETHNTQGDQKPEL) is disordered. Polar residues predominate over residues 625 to 654 (SRSQDSESGYINVTSLKETHNTQGDQKPEL).

The protein belongs to the prefoldin subunit beta family.

This Mus musculus (Mouse) protein is Coiled-coil domain-containing protein 30 (Ccdc30).